The following is an 81-amino-acid chain: Omega-conotoxin-like Vc6.4 (81 aa).

A signal peptide spans 1-22; it reads MKLTCVMIVAVLFLTANTFVTA. The propeptide occupies 23–51; the sequence is VPHSSNVLENLYLKARHEMENPEASKLNT. 3 disulfides stabilise this stretch: Cys-55/Cys-72, Cys-62/Cys-76, and Cys-71/Cys-80.

Belongs to the conotoxin O1 superfamily. As to expression, expressed by the venom duct.

Its subcellular location is the secreted. Functionally, omega-conotoxins act at presynaptic membranes, they bind and block voltage-gated calcium channels. Act on high voltage-activated (HVA) calcium currents in molluscan neurons. The chain is Omega-conotoxin-like Vc6.4 from Conus victoriae (Queen Victoria cone).